The sequence spans 429 residues: 3-oxo-tetronate kinase (429 aa).

ATP-binding positions include serine 268, glycine 366–threonine 369, and glycine 410.

The protein belongs to the four-carbon acid sugar kinase family.

The enzyme catalyses 3-dehydro-L-erythronate + ATP = 3-dehydro-4-O-phospho-L-erythronate + ADP + H(+). The catalysed reaction is 3-dehydro-D-erythronate + ATP = 3-dehydro-4-O-phospho-D-erythronate + ADP + H(+). In terms of biological role, catalyzes the ATP-dependent phosphorylation of 3-oxo-tetronate to 3-oxo-tetronate 4-phosphate. The protein is 3-oxo-tetronate kinase of Pseudomonas savastanoi pv. phaseolicola (strain 1448A / Race 6) (Pseudomonas syringae pv. phaseolicola (strain 1448A / Race 6)).